The following is a 209-amino-acid chain: MESTEKLTDTNAILAYLYETFPLCFIAEGETKPLKIGLFQDLAERLADDSKVSKTQLRVALRRYTSSWRYLKCVKAGAQRVNLDGEPCGELEQEHIDHAQAMLKESQDKAKAKRAALAPKPAAKKAPKKVAVPQRAKTERPAKPAPKAAAPVVNYVQAQLTDLTKKQRVNVKLGMTPVAGVITDINKEDIHVQLDSGLTIKVRAEHILL.

The disordered stretch occupies residues 105-148 (ESQDKAKAKRAALAPKPAAKKAPKKVAVPQRAKTERPAKPAPKA).

The protein belongs to the ProQ family.

Its subcellular location is the cytoplasm. Its function is as follows. RNA chaperone with significant RNA binding, RNA strand exchange and RNA duplexing activities. The sequence is that of RNA chaperone ProQ from Shewanella baltica (strain OS223).